The chain runs to 603 residues: Geraniol synthase, chloroplastic (603 aa).

The transit peptide at 1–35 (MSSISQKVVIGLNKAAANNNLQNLDRRGFKTRCVS) directs the protein to the chloroplast. (2E)-geranyl diphosphate-binding residues include Arg319, Asp356, Asp360, Arg497, and Asp500. Residues Asp356 and Asp360 each contribute to the Mg(2+) site. The short motif at 356 to 360 (DDVYD) is the DDXXD motif element. Residues Asp500, Thr504, and Glu508 each contribute to the Mg(2+) site.

The protein belongs to the terpene synthase family. Tpsb subfamily. Monomer. It depends on Mg(2+) as a cofactor. Mn(2+) serves as cofactor.

The protein localises to the plastid. It is found in the chloroplast. The enzyme catalyses (2E)-geranyl diphosphate + H2O = (2E)-geraniol + diphosphate. It participates in secondary metabolite biosynthesis; terpenoid biosynthesis. Monoterpene synthase (mono-TPS) involved in the biosynthesis of monoterpenes natural products. Catalyzes the conversion of (2E)-geranyl diphosphate (GPP) into geraniol. This Perilla frutescens var. hirtella (Perilla citriodora) protein is Geraniol synthase, chloroplastic.